The primary structure comprises 1199 residues: DNA-directed RNA polymerase subunit beta' (1199 aa).

Zn(2+)-binding residues include Cys-60, Cys-62, Cys-75, and Cys-78. 3 residues coordinate Mg(2+): Asp-449, Asp-451, and Asp-453. The Zn(2+) site is built by Cys-818, Cys-892, Cys-899, and Cys-902.

This sequence belongs to the RNA polymerase beta' chain family. In terms of assembly, the RNAP catalytic core consists of 2 alpha, 1 beta, 1 beta' and 1 omega subunit. When a sigma factor is associated with the core the holoenzyme is formed, which can initiate transcription. The cofactor is Mg(2+). Zn(2+) is required as a cofactor.

It carries out the reaction RNA(n) + a ribonucleoside 5'-triphosphate = RNA(n+1) + diphosphate. Its function is as follows. DNA-dependent RNA polymerase catalyzes the transcription of DNA into RNA using the four ribonucleoside triphosphates as substrates. This is DNA-directed RNA polymerase subunit beta' from Bacillus velezensis (strain DSM 23117 / BGSC 10A6 / LMG 26770 / FZB42) (Bacillus amyloliquefaciens subsp. plantarum).